A 240-amino-acid polypeptide reads, in one-letter code: Alkaline phosphatase synthesis transcriptional regulatory protein PhoP (240 aa).

The Response regulatory domain occupies 4 to 118 (KILVVDDEES…EVNARVKAIL (115 aa)). D53 is subject to 4-aspartylphosphate. A DNA-binding region (ompR/PhoB-type) is located at residues 136–235 (EGQIVIGDLK…IRGLGYKLEE (100 aa)).

Phosphorylated by PhoR.

The protein localises to the cytoplasm. Its function is as follows. Member of the two-component regulatory system PhoP/PhoR involved in the regulation of alkaline phosphatase genes phoA and phoB and of phosphodiesterase. The protein is Alkaline phosphatase synthesis transcriptional regulatory protein PhoP (phoP) of Bacillus subtilis (strain 168).